A 93-amino-acid chain; its full sequence is Small ribosomal subunit protein bS20 (93 aa).

Residues 1–11 (MPQHKSAEKRV) are compositionally biased toward basic and acidic residues. The segment at 1–23 (MPQHKSAEKRVRQSKRRNARNRV) is disordered. Basic residues predominate over residues 12-23 (RQSKRRNARNRV).

This sequence belongs to the bacterial ribosomal protein bS20 family.

Binds directly to 16S ribosomal RNA. The protein is Small ribosomal subunit protein bS20 of Chloroherpeton thalassium (strain ATCC 35110 / GB-78).